The sequence spans 569 residues: Glutamate--tRNA ligase (569 aa).

Residues 110 to 120 carry the 'HIGH' region motif; sequence PNPNGPPTLGS.

It belongs to the class-I aminoacyl-tRNA synthetase family. Glutamate--tRNA ligase type 2 subfamily.

It localises to the cytoplasm. It catalyses the reaction tRNA(Glu) + L-glutamate + ATP = L-glutamyl-tRNA(Glu) + AMP + diphosphate. Catalyzes the attachment of glutamate to tRNA(Glu) in a two-step reaction: glutamate is first activated by ATP to form Glu-AMP and then transferred to the acceptor end of tRNA(Glu). The protein is Glutamate--tRNA ligase of Methanococcoides burtonii (strain DSM 6242 / NBRC 107633 / OCM 468 / ACE-M).